The sequence spans 65 residues: Photosystem II reaction center protein J (65 aa).

A helical membrane pass occupies residues 35–55 (LWLVATAGGTAVIFVLGIFFY).

Belongs to the PsbJ family. In terms of assembly, PSII is composed of 1 copy each of membrane proteins PsbA, PsbB, PsbC, PsbD, PsbE, PsbF, PsbH, PsbI, PsbJ, PsbK, PsbL, PsbM, PsbT, PsbX, PsbY, Psb30/Ycf12, peripheral proteins PsbO, CyanoQ (PsbQ), PsbU, PsbV and a large number of cofactors. It forms dimeric complexes.

The protein localises to the cellular thylakoid membrane. One of the components of the core complex of photosystem II (PSII). PSII is a light-driven water:plastoquinone oxidoreductase that uses light energy to abstract electrons from H(2)O, generating O(2) and a proton gradient subsequently used for ATP formation. It consists of a core antenna complex that captures photons, and an electron transfer chain that converts photonic excitation into a charge separation. The sequence is that of Photosystem II reaction center protein J from Prochlorococcus marinus (strain NATL2A).